Consider the following 157-residue polypeptide: SsrA-binding protein (157 aa).

Basic and acidic residues predominate over residues 136 to 151 (KRETEKKRDWSREKGR). Positions 136–157 (KRETEKKRDWSREKGRLLRARG) are disordered.

This sequence belongs to the SmpB family.

It is found in the cytoplasm. In terms of biological role, required for rescue of stalled ribosomes mediated by trans-translation. Binds to transfer-messenger RNA (tmRNA), required for stable association of tmRNA with ribosomes. tmRNA and SmpB together mimic tRNA shape, replacing the anticodon stem-loop with SmpB. tmRNA is encoded by the ssrA gene; the 2 termini fold to resemble tRNA(Ala) and it encodes a 'tag peptide', a short internal open reading frame. During trans-translation Ala-aminoacylated tmRNA acts like a tRNA, entering the A-site of stalled ribosomes, displacing the stalled mRNA. The ribosome then switches to translate the ORF on the tmRNA; the nascent peptide is terminated with the 'tag peptide' encoded by the tmRNA and targeted for degradation. The ribosome is freed to recommence translation, which seems to be the essential function of trans-translation. This Rhodopseudomonas palustris (strain HaA2) protein is SsrA-binding protein.